A 460-amino-acid chain; its full sequence is Decaprenylphosphoryl-beta-D-ribose oxidase (460 aa).

In terms of domain architecture, FAD-binding PCMH-type spans 19-193 (TAPTVASVLS…LRATIEMTPT (175 aa)). FAD is bound by residues 52-62 (ARGLGRSYGDN), G116, 121-124 (TVGG), 128-131 (CDIH), I183, and Y414.

The protein belongs to the DprE1 family. Monomer. Interacts with DprE2 to form an epimerase complex.

The protein localises to the periplasm. It catalyses the reaction trans,octa-cis-decaprenylphospho-beta-D-ribofuranose + FAD + H(+) = trans,octa-cis-decaprenylphospho-beta-D-erythro-pentofuranosid-2-ulose + FADH2. The protein operates within cell wall biogenesis; cell wall polysaccharide biosynthesis. Its activity is regulated as follows. Is inhibited by 8-nitro-benzothiazinones (BTZs) such as BTZ043; BTZs are a new class of antimycobacterial agents that block formation of both cell-wall lipoarabinomannan and arabinogalactan via inhibition of decaprenyl-phospho-arabinose (DPA) synthesis. BTZs are suicide inhibitors that act via covalent modification of DprE1; the essential nitro group of these compounds is reduced by DprE1 to a nitroso group, which then specifically reacts with Cys-386 of DprE1 to form an irreversible semimercaptal adduct. Other compounds with diverse scaffolds (dinitrobenzamides and nitrobenzoquinoxalines) also act as covalent DprE1 inhibitors. Functionally, component of the DprE1-DprE2 complex that catalyzes the 2-step epimerization of decaprenyl-phospho-ribose (DPR) to decaprenyl-phospho-arabinose (DPA), a key precursor that serves as the arabinose donor required for the synthesis of cell-wall arabinans. DprE1 catalyzes the first step of epimerization, namely FAD-dependent oxidation of the C2' hydroxyl of DPR to yield the keto intermediate decaprenyl-phospho-2'-keto-D-arabinose (DPX). The intermediate DPX is then transferred to DprE2 subunit of the epimerase complex, most probably through a 'substrate channel' at the interface of DprE1-DprE2 complex. Can also use farnesyl-phosphoryl-beta-D-ribofuranose (FPR) as substrate in vitro. Appears to be essential for the growth of M.smegmatis. The polypeptide is Decaprenylphosphoryl-beta-D-ribose oxidase (Mycolicibacterium smegmatis (strain ATCC 700084 / mc(2)155) (Mycobacterium smegmatis)).